The sequence spans 133 residues: ATP synthase epsilon chain (133 aa).

It belongs to the ATPase epsilon chain family. In terms of assembly, F-type ATPases have 2 components, CF(1) - the catalytic core - and CF(0) - the membrane proton channel. CF(1) has five subunits: alpha(3), beta(3), gamma(1), delta(1), epsilon(1). CF(0) has three main subunits: a, b and c.

It is found in the cell membrane. In terms of biological role, produces ATP from ADP in the presence of a proton gradient across the membrane. The sequence is that of ATP synthase epsilon chain (atpC) from Clostridium acetobutylicum (strain ATCC 824 / DSM 792 / JCM 1419 / IAM 19013 / LMG 5710 / NBRC 13948 / NRRL B-527 / VKM B-1787 / 2291 / W).